Here is a 213-residue protein sequence, read N- to C-terminus: Glutathione S-transferase DHAR2 (213 aa).

Cys6 is modified (S-glutathionyl cysteine). Glutathione contacts are provided by Lys8 and Asp19. L-ascorbate is bound by residues Lys8 and Asp19. The 74-residue stretch at 10–83 folds into the GST N-terminal domain; that stretch reads AVGAPDVLGD…DVIVGLLEEK (74 aa). Cys20 is modified (S-glutathionyl cysteine). The Nucleophile role is filled by Cys20. Residues 20 to 25 carry the Glutathione-binding motif; sequence CPFSQR. Lys47, Val60, Ser73, His160, and Trp207 together coordinate glutathione. A GST C-terminal domain is found at 84–213; that stretch reads YPEPSLKTPP…VAGWESKVNA (130 aa). L-ascorbate is bound at residue Lys210.

Belongs to the GST superfamily. DHAR family. As to quaternary structure, monomer. In terms of processing, spontaneous S-glutathionylation in the presence of oxidized glutathione (GSSG).

The protein localises to the cytoplasm. It localises to the cytosol. It carries out the reaction RX + glutathione = an S-substituted glutathione + a halide anion + H(+). The catalysed reaction is L-dehydroascorbate + 2 glutathione = glutathione disulfide + L-ascorbate. Functionally, displays a dual function. As a soluble protein, exhibits glutathione-dependent thiol transferase and dehydroascorbate (DHA) reductase activities. Exhibits glutathione-dependent thiol transferase and dehydroascorbate (DHA) reductase activities. Key component of the ascorbate recycling system. Involved in the redox homeostasis, especially in scavenging of ROS under oxidative stresses. Plays a role in ozone tolerance. The polypeptide is Glutathione S-transferase DHAR2 (DHAR2) (Arabidopsis thaliana (Mouse-ear cress)).